We begin with the raw amino-acid sequence, 1385 residues long: DNA-directed RNA polymerase subunit beta (1385 aa).

It belongs to the RNA polymerase beta chain family. In terms of assembly, the RNAP catalytic core consists of 2 alpha, 1 beta, 1 beta' and 1 omega subunit. When a sigma factor is associated with the core the holoenzyme is formed, which can initiate transcription.

The enzyme catalyses RNA(n) + a ribonucleoside 5'-triphosphate = RNA(n+1) + diphosphate. In terms of biological role, DNA-dependent RNA polymerase catalyzes the transcription of DNA into RNA using the four ribonucleoside triphosphates as substrates. This chain is DNA-directed RNA polymerase subunit beta, found in Sulfurovum sp. (strain NBC37-1).